A 531-amino-acid chain; its full sequence is Polyamine transporter PUT1 (531 aa).

The tract at residues 1–76 is disordered; sequence MADTGGRPEV…LPDGDAGGPM (76 aa). Residues 17–33 show a composition bias toward low complexity; sequence SPGHPAASTTAAAAADL. The span at 34-44 shows a compositional bias: basic and acidic residues; the sequence is GHADTGQEKPT. Helical transmembrane passes span 83–103, 113–133, 147–167, 193–213, 224–244, 262–284, 296–316, 341–361, 391–411, 414–434, 453–473, and 476–496; these read VSMI…PFGI, LLAI…EALI, YVVW…GWMK, LGGG…LTLL, VAIC…LIAL, WNLY…TLAG, ALFY…LAGT, AWLM…MFVA, TPLA…MMSF, IVAA…VAFI, TAGC…VLAL, and LKVA…QPAL.

Belongs to the amino acid-polyamine-organocation (APC) superfamily. Polyamine:cation symporter (PHS) (TC 2.A.3.12) family. Expressed in seedling roots, leaves, stems, flowers and siliques.

It is found in the cell membrane. Its function is as follows. Cell membrane polyamine/proton symporter involved in the polyamine uptake in cells. Possesses high affinity for spermidine and lower affinity for spermine and putrescine. Transports paraquat, a polyamine analog, and thus confers sensitivity to this chemical which is used as a herbicide. The sequence is that of Polyamine transporter PUT1 (PUT1) from Oryza sativa subsp. japonica (Rice).